Reading from the N-terminus, the 524-residue chain is Indoleacetamide hydrolase (524 aa).

2 stretches are compositionally biased toward basic residues: residues 1–26 (MAKKTASKKKSVSRKVTKTSSKKATA) and 34–54 (AAKKSVKKAAPRKSATARRPK). Positions 1–56 (MAKKTASKKKSVSRKVTKTSSKKATARKGAVAKAAKKSVKKAAPRKSATARRPKGP) are disordered. Residues K133 and S208 each act as charge relay system in the active site. S232 serves as the catalytic Acyl-ester intermediate.

Belongs to the amidase family.

Its pathway is plant hormone metabolism; auxin biosynthesis. In terms of biological role, hydrolyzes indole-3-acetamide (IAM) into indole-3-acetic acid (IAA). The polypeptide is Indoleacetamide hydrolase (bam) (Bradyrhizobium diazoefficiens (strain JCM 10833 / BCRC 13528 / IAM 13628 / NBRC 14792 / USDA 110)).